Consider the following 149-residue polypeptide: D-aminoacyl-tRNA deacylase (149 aa).

A Gly-cisPro motif, important for rejection of L-amino acids motif is present at residues 137–138 (GP).

The protein belongs to the DTD family. As to quaternary structure, homodimer.

The protein resides in the cytoplasm. It carries out the reaction glycyl-tRNA(Ala) + H2O = tRNA(Ala) + glycine + H(+). The enzyme catalyses a D-aminoacyl-tRNA + H2O = a tRNA + a D-alpha-amino acid + H(+). Its function is as follows. An aminoacyl-tRNA editing enzyme that deacylates mischarged D-aminoacyl-tRNAs. Also deacylates mischarged glycyl-tRNA(Ala), protecting cells against glycine mischarging by AlaRS. Acts via tRNA-based rather than protein-based catalysis; rejects L-amino acids rather than detecting D-amino acids in the active site. By recycling D-aminoacyl-tRNA to D-amino acids and free tRNA molecules, this enzyme counteracts the toxicity associated with the formation of D-aminoacyl-tRNA entities in vivo and helps enforce protein L-homochirality. This chain is D-aminoacyl-tRNA deacylase, found in Alkaliphilus metalliredigens (strain QYMF).